We begin with the raw amino-acid sequence, 480 residues long: Sestrin-2 (480 aa).

An N-acetylmethionine modification is found at Met1. The segment at Pro20 to Ser45 is disordered. Residues Gly66 to Ser239 form an N-terminal domain; mediates the alkylhydroperoxide reductase activity region. Catalysis depends on Cys125, which acts as the Cysteine sulfenic acid (-SOH) intermediate. Lys175 participates in a covalent cross-link: Glycyl lysine isopeptide (Lys-Gly) (interchain with G-Cter in ubiquitin). Disordered regions lie at residues Ala222–Phe252 and Leu272–Lys291. Ser249 is subject to Phosphoserine. The segment at Pro308 to Thr480 is C-terminal domain; mediates TORC1 regulation. Residues Thr374–Thr377, Thr386, and Glu451 contribute to the L-leucine site.

It belongs to the sestrin family. As to quaternary structure, interacts with the GATOR2 complex which is composed of MIOS, SEC13, SEH1L, WDR24 and WDR59; the interaction is negatively regulated by leucine. Conveys leucine availability via direct interaction with SEH1L and WDR24 components of the GATOR2 complex. Interacts with RRAGA, RRAGB, RRAGC and RRAGD; may function as a guanine nucleotide dissociation inhibitor for RRAGs and regulate them. May interact with the TORC2 complex. Interacts with KEAP1, RBX1, SQSTM and ULK1; to regulate the degradation of KEAP1. May also associate with the complex composed of TSC1, TSC2 and the AMP-responsive protein kinase/AMPK to regulate TORC1 signaling. May interact with PRDX1. Phosphorylated by ULK1 at multiple sites. Post-translationally, ubiquitinated at Lys-175 by RNF167 via 'Lys-63'-linked polyubiquitination in response to leucine deprivation: ubiquitination promotes SESN2-interaction with the GATOR2 complex, leading to inhibit the TORC1 signaling pathway. Deubiquitinated at Lys-175 by STAMBPL1, promoting the TORC1 signaling pathway. Ubiquitinated by RNF186; ubiquitination mediates proteasomal degradation. In terms of tissue distribution, widely expressed.

The protein resides in the cytoplasm. The enzyme catalyses a hydroperoxide + L-cysteinyl-[protein] = S-hydroxy-L-cysteinyl-[protein] + an alcohol. In terms of biological role, functions as an intracellular leucine sensor that negatively regulates the mTORC1 signaling pathway through the GATOR complex. In absence of leucine, binds the GATOR subcomplex GATOR2 and prevents mTORC1 signaling. Binding of leucine to SESN2 disrupts its interaction with GATOR2 thereby activating the TORC1 signaling pathway. This stress-inducible metabolic regulator also plays a role in protection against oxidative and genotoxic stresses. May negatively regulate protein translation in response to endoplasmic reticulum stress, via mTORC1. May positively regulate the transcription by NFE2L2 of genes involved in the response to oxidative stress by facilitating the SQSTM1-mediated autophagic degradation of KEAP1. May also mediate TP53 inhibition of TORC1 signaling upon genotoxic stress. Moreover, may prevent the accumulation of reactive oxygen species (ROS) through the alkylhydroperoxide reductase activity born by the N-terminal domain of the protein. Was originally reported to contribute to oxidative stress resistance by reducing PRDX1. However, this could not be confirmed. This Homo sapiens (Human) protein is Sestrin-2.